The primary structure comprises 235 residues: Uridylate kinase (235 aa).

Residue 9-12 participates in ATP binding; it reads KISG. Gly-50 lines the UMP pocket. Residues Gly-51 and Arg-55 each coordinate ATP. Residues Asp-70 and 131-138 contribute to the UMP site; that span reads TGFPYFTT. ATP-binding residues include Asn-159, Tyr-165, and Asp-168.

This sequence belongs to the UMP kinase family. Homohexamer; trimer of dimers.

Its subcellular location is the cytoplasm. The catalysed reaction is UMP + ATP = UDP + ADP. It functions in the pathway pyrimidine metabolism; CTP biosynthesis via de novo pathway; UDP from UMP (UMPK route): step 1/1. Its activity is regulated as follows. Unlike other bacteria, is not activated by GTP. UTP is a competitive inhibitor against UMP and a non-competitive inhibitor toward ATP. Functionally, catalyzes the reversible phosphorylation of UMP to UDP, with ATP as the most efficient phosphate donor. Is also able to phosphorylate dUMP. The protein is Uridylate kinase (pyrH) of Ureaplasma parvum serovar 3 (strain ATCC 700970).